We begin with the raw amino-acid sequence, 622 residues long: 1-deoxy-D-xylulose-5-phosphate synthase (622 aa).

Thiamine diphosphate contacts are provided by residues H80 and 121-123; that span reads GHS. Mg(2+) is bound at residue D152. Thiamine diphosphate contacts are provided by residues 153–154, N181, Y288, and E370; that span reads GA. Residue N181 coordinates Mg(2+).

It belongs to the transketolase family. DXPS subfamily. In terms of assembly, homodimer. Mg(2+) serves as cofactor. The cofactor is thiamine diphosphate.

It carries out the reaction D-glyceraldehyde 3-phosphate + pyruvate + H(+) = 1-deoxy-D-xylulose 5-phosphate + CO2. It participates in metabolic intermediate biosynthesis; 1-deoxy-D-xylulose 5-phosphate biosynthesis; 1-deoxy-D-xylulose 5-phosphate from D-glyceraldehyde 3-phosphate and pyruvate: step 1/1. Its function is as follows. Catalyzes the acyloin condensation reaction between C atoms 2 and 3 of pyruvate and glyceraldehyde 3-phosphate to yield 1-deoxy-D-xylulose-5-phosphate (DXP). This Shewanella denitrificans (strain OS217 / ATCC BAA-1090 / DSM 15013) protein is 1-deoxy-D-xylulose-5-phosphate synthase.